Reading from the N-terminus, the 213-residue chain is Riboflavin/roseoflavin transporter RibM (213 aa).

Transmembrane regions (helical) follow at residues 15-35 (HIIW…ALGF), 38-58 (SLWT…AFYG), 107-129 (IAAA…SLSW), 136-158 (YIFV…FWFA), and 171-193 (FANG…LWGM).

Belongs to the nicotinamide ribonucleoside (NR) uptake permease (TC 4.B.1) family.

The protein resides in the cell membrane. Functionally, transports riboflavin and roseoflavin. Can also transport FMN and FAD. May confer roseoflavin resistance to S.davawensis, which naturally produces this antibiotic during stationary growth phase. The polypeptide is Riboflavin/roseoflavin transporter RibM (Streptomyces davaonensis (strain DSM 101723 / JCM 4913 / KCC S-0913 / 768)).